Consider the following 404-residue polypeptide: ORC1-type DNA replication protein 2 (404 aa).

Residues 64 to 68, tyrosine 205, and arginine 217 each bind ATP; that span reads TGKTS.

The protein belongs to the CDC6/cdc18 family. As to quaternary structure, interacts with MCM.

Its function is as follows. Involved in regulation of DNA replication. Stimulates the helicase activity of MCM via stimulation of its ATPase activity. Binding to MCM may result in conformational changes in MCM, leading to catalytic ATP hydrolysis by the helicase. Directly stimulates MCM movement along single-stranded and double-stranded DNA. Does not bind DNA. This is ORC1-type DNA replication protein 2 (cdc6-2) from Thermoplasma acidophilum (strain ATCC 25905 / DSM 1728 / JCM 9062 / NBRC 15155 / AMRC-C165).